The primary structure comprises 1372 residues: Paired amphipathic helix protein Sin3-like 1 (1372 aa).

A disordered region spans residues 1-50 (MKRIRDDVYASGSQFRRPLGSSRGQLCGQSPVHGSGDTEEEEEGGSRRVS). PAH domains follow at residues 51–121 (QKLT…LPKG) and 136–206 (KTVE…LPAS). Low complexity predominate over residues 210 to 222 (HSAAQHSRSQAQQ). Disordered stretches follow at residues 210–244 (HSAAQHSRSQAQQYSDRGSDPPLLHQMQVEKERRR) and 272–323 (REQR…SGSA). The segment covering 272 to 315 (REQRKRLDKENRARRGRDLDDREAGQDNLHHFPEKRKSSRRAEA) has biased composition (basic and acidic residues). The PAH 3 domain occupies 331–400 (LKSMYKQAFV…DEFNQFFERC (70 aa)). Disordered regions lie at residues 764–783 (DVNHSTSPNGEAAVSSGGDT), 791–817 (LKSAANGDENSSSGTFKHGIGLLNKDS), and 934–1056 (GLRS…AEGM). Positions 938–957 (DSSKGTRNSDDPEGPSRNEK) are enriched in basic and acidic residues. Acidic residues-rich tracts occupy residues 990-1013 (AEAEVEADAEVENEDDADDVDSEN) and 1028-1042 (SQDEDREEENGEHDE). S1049 is subject to Phosphoserine.

As to quaternary structure, interacts (via PAH3) with ALY2. Interacts (via PAH2) with TBP1. Interacts with ALY3, GATA21, TRP2, TKI1, VAL1, SKP1B, FBX5 and PUB14.

Its subcellular location is the nucleus. Acts as a transcriptional repressor. A histone deacetylase (HDAC) activity is required for transcription repression. May play a role in telomere stability. This is Paired amphipathic helix protein Sin3-like 1 (SNL1) from Arabidopsis thaliana (Mouse-ear cress).